The sequence spans 364 residues: Methylthioribose-1-phosphate isomerase (364 aa).

Asp-254 functions as the Proton donor in the catalytic mechanism.

The protein belongs to the eIF-2B alpha/beta/delta subunits family. MtnA subfamily.

It localises to the cytoplasm. Its subcellular location is the nucleus. The enzyme catalyses 5-(methylsulfanyl)-alpha-D-ribose 1-phosphate = 5-(methylsulfanyl)-D-ribulose 1-phosphate. It functions in the pathway amino-acid biosynthesis; L-methionine biosynthesis via salvage pathway; L-methionine from S-methyl-5-thio-alpha-D-ribose 1-phosphate: step 1/6. Functionally, catalyzes the interconversion of methylthioribose-1-phosphate (MTR-1-P) into methylthioribulose-1-phosphate (MTRu-1-P). The sequence is that of Methylthioribose-1-phosphate isomerase from Drosophila yakuba (Fruit fly).